The chain runs to 223 residues: Putative N-acetylmannosamine-6-phosphate 2-epimerase (223 aa).

This sequence belongs to the NanE family.

The enzyme catalyses an N-acyl-D-glucosamine 6-phosphate = an N-acyl-D-mannosamine 6-phosphate. It participates in amino-sugar metabolism; N-acetylneuraminate degradation; D-fructose 6-phosphate from N-acetylneuraminate: step 3/5. Converts N-acetylmannosamine-6-phosphate (ManNAc-6-P) to N-acetylglucosamine-6-phosphate (GlcNAc-6-P). This is Putative N-acetylmannosamine-6-phosphate 2-epimerase from Clostridioides difficile (strain 630) (Peptoclostridium difficile).